Consider the following 245-residue polypeptide: DNA polymerase sliding clamp (245 aa).

The protein belongs to the PCNA family. As to quaternary structure, homotrimer. The subunits circularize to form a toroid; DNA passes through its center. Replication factor C (RFC) is required to load the toroid on the DNA.

Sliding clamp subunit that acts as a moving platform for DNA processing. Responsible for tethering the catalytic subunit of DNA polymerase and other proteins to DNA during high-speed replication. The chain is DNA polymerase sliding clamp from Methanococcoides burtonii (strain DSM 6242 / NBRC 107633 / OCM 468 / ACE-M).